The following is a 332-amino-acid chain: Glycerol-3-phosphate dehydrogenase [NAD(P)+] (332 aa).

Residues tryptophan 11, arginine 30, and lysine 108 each coordinate NADPH. Residues lysine 108, glycine 137, and serine 139 each contribute to the sn-glycerol 3-phosphate site. NADPH is bound at residue alanine 141. Residues lysine 192, aspartate 245, serine 255, arginine 256, and asparagine 257 each contribute to the sn-glycerol 3-phosphate site. Lysine 192 acts as the Proton acceptor in catalysis. An NADPH-binding site is contributed by arginine 256. NADPH-binding residues include valine 280 and glutamate 282.

Belongs to the NAD-dependent glycerol-3-phosphate dehydrogenase family.

It is found in the cytoplasm. It catalyses the reaction sn-glycerol 3-phosphate + NAD(+) = dihydroxyacetone phosphate + NADH + H(+). The catalysed reaction is sn-glycerol 3-phosphate + NADP(+) = dihydroxyacetone phosphate + NADPH + H(+). The protein operates within membrane lipid metabolism; glycerophospholipid metabolism. Catalyzes the reduction of the glycolytic intermediate dihydroxyacetone phosphate (DHAP) to sn-glycerol 3-phosphate (G3P), the key precursor for phospholipid synthesis. This chain is Glycerol-3-phosphate dehydrogenase [NAD(P)+], found in Burkholderia cenocepacia (strain ATCC BAA-245 / DSM 16553 / LMG 16656 / NCTC 13227 / J2315 / CF5610) (Burkholderia cepacia (strain J2315)).